Consider the following 337-residue polypeptide: Phosphatidate cytidylyltransferase, mitochondrial (337 aa).

This sequence belongs to the TAM41 family. It depends on Mg(2+) as a cofactor. In terms of tissue distribution, brain and liver.

Its subcellular location is the mitochondrion inner membrane. It carries out the reaction a 1,2-diacyl-sn-glycero-3-phosphate + CTP + H(+) = a CDP-1,2-diacyl-sn-glycerol + diphosphate. The protein operates within phospholipid metabolism; CDP-diacylglycerol biosynthesis; CDP-diacylglycerol from sn-glycerol 3-phosphate: step 3/3. In terms of biological role, catalyzes the conversion of phosphatidic acid (PA) to CDP-diacylglycerol (CDP-DAG), an essential intermediate in the synthesis of phosphatidylglycerol, cardiolipin and phosphatidylinositol. The protein is Phosphatidate cytidylyltransferase, mitochondrial (Tamm41) of Rattus norvegicus (Rat).